The sequence spans 163 residues: Nucleotide-binding protein Npun_R4736 (163 aa).

Belongs to the YajQ family.

Its function is as follows. Nucleotide-binding protein. This chain is Nucleotide-binding protein Npun_R4736, found in Nostoc punctiforme (strain ATCC 29133 / PCC 73102).